A 135-amino-acid chain; its full sequence is Large ribosomal subunit protein mL41B (135 aa).

The N-terminal 13 residues, 1 to 13 (MGLITKIARGLVR), are a transit peptide targeting the mitochondrion.

Belongs to the mitochondrion-specific ribosomal protein mL41 family. As to quaternary structure, component of the mitochondrial ribosome large subunit (39S) which comprises a 16S rRNA and about 50 distinct proteins.

It is found in the mitochondrion. Functionally, component of the mitochondrial ribosome large subunit. Also involved in apoptosis and cell cycle. The chain is Large ribosomal subunit protein mL41B (mrpl41-b) from Xenopus laevis (African clawed frog).